A 948-amino-acid polypeptide reads, in one-letter code: Isoleucine--tRNA ligase (948 aa).

The short motif at 58-68 is the 'HIGH' region element; it reads PYANGSIHIGH. An L-isoleucyl-5'-AMP-binding site is contributed by glutamate 572. The short motif at 613-617 is the 'KMSKS' region element; the sequence is KMSKS. Lysine 616 serves as a coordination point for ATP. Cysteine 911, cysteine 914, cysteine 931, and cysteine 934 together coordinate Zn(2+).

The protein belongs to the class-I aminoacyl-tRNA synthetase family. IleS type 1 subfamily. Monomer. Zn(2+) serves as cofactor.

The protein resides in the cytoplasm. It carries out the reaction tRNA(Ile) + L-isoleucine + ATP = L-isoleucyl-tRNA(Ile) + AMP + diphosphate. In terms of biological role, catalyzes the attachment of isoleucine to tRNA(Ile). As IleRS can inadvertently accommodate and process structurally similar amino acids such as valine, to avoid such errors it has two additional distinct tRNA(Ile)-dependent editing activities. One activity is designated as 'pretransfer' editing and involves the hydrolysis of activated Val-AMP. The other activity is designated 'posttransfer' editing and involves deacylation of mischarged Val-tRNA(Ile). The protein is Isoleucine--tRNA ligase of Edwardsiella ictaluri (strain 93-146).